A 185-amino-acid polypeptide reads, in one-letter code: Peptidyl-tRNA hydrolase (185 aa).

Tyrosine 14 is a tRNA binding site. The active-site Proton acceptor is the histidine 19. Residues tyrosine 64, asparagine 66, and asparagine 112 each contribute to the tRNA site.

Belongs to the PTH family. In terms of assembly, monomer.

Its subcellular location is the cytoplasm. The enzyme catalyses an N-acyl-L-alpha-aminoacyl-tRNA + H2O = an N-acyl-L-amino acid + a tRNA + H(+). Functionally, hydrolyzes ribosome-free peptidyl-tRNAs (with 1 or more amino acids incorporated), which drop off the ribosome during protein synthesis, or as a result of ribosome stalling. In terms of biological role, catalyzes the release of premature peptidyl moieties from peptidyl-tRNA molecules trapped in stalled 50S ribosomal subunits, and thus maintains levels of free tRNAs and 50S ribosomes. The polypeptide is Peptidyl-tRNA hydrolase (Shouchella clausii (strain KSM-K16) (Alkalihalobacillus clausii)).